The primary structure comprises 485 residues: Glutamate--tRNA ligase 1 (485 aa).

The 'HIGH' region motif lies at 10-20 (PSPTGAIHIGN). The 'KMSKS' region motif lies at 252 to 256 (KLSKR). Residue Lys255 coordinates ATP.

This sequence belongs to the class-I aminoacyl-tRNA synthetase family. Glutamate--tRNA ligase type 1 subfamily. In terms of assembly, monomer.

The protein localises to the cytoplasm. It carries out the reaction tRNA(Glu) + L-glutamate + ATP = L-glutamyl-tRNA(Glu) + AMP + diphosphate. Catalyzes the attachment of glutamate to tRNA(Glu) in a two-step reaction: glutamate is first activated by ATP to form Glu-AMP and then transferred to the acceptor end of tRNA(Glu). In Thermoanaerobacter pseudethanolicus (strain ATCC 33223 / 39E) (Clostridium thermohydrosulfuricum), this protein is Glutamate--tRNA ligase 1.